Consider the following 70-residue polypeptide: Large ribosomal subunit protein bL31 (70 aa).

Zn(2+)-binding residues include C16, C18, C38, and C41.

The protein belongs to the bacterial ribosomal protein bL31 family. Type A subfamily. As to quaternary structure, part of the 50S ribosomal subunit. It depends on Zn(2+) as a cofactor.

Binds the 23S rRNA. This is Large ribosomal subunit protein bL31 from Saccharopolyspora erythraea (strain ATCC 11635 / DSM 40517 / JCM 4748 / NBRC 13426 / NCIMB 8594 / NRRL 2338).